Reading from the N-terminus, the 1069-residue chain is Acyl-CoA dehydrogenase family member 10 (1069 aa).

Lysine 413 is subject to N6-succinyllysine. Lysine 427 carries the N6-acetyllysine; alternate modification. N6-succinyllysine; alternate is present on lysine 427. FAD contacts are provided by residues phenylalanine 792–serine 802, serine 828, arginine 943, glutamine 1013, and glutamate 1044. N6-acetyllysine; alternate is present on lysine 1052. The residue at position 1052 (lysine 1052) is an N6-succinyllysine; alternate.

Belongs to the acyl-CoA dehydrogenase family. FAD is required as a cofactor.

It carries out the reaction a 2,3-saturated acyl-CoA + A = a 2,3-dehydroacyl-CoA + AH2. Functionally, acyl-CoA dehydrogenase only active with R- and S-2-methyl-C15-CoA. The polypeptide is Acyl-CoA dehydrogenase family member 10 (Acad10) (Mus musculus (Mouse)).